Consider the following 72-residue polypeptide: Protein SlyX (72 aa).

This sequence belongs to the SlyX family.

This is Protein SlyX from Cronobacter sakazakii (strain ATCC BAA-894) (Enterobacter sakazakii).